A 59-amino-acid polypeptide reads, in one-letter code: MGKKKGKGAVGLIALVCEETGIRNYTTTKNRRNTQEKLELMKYCPSLRKHTLHKEGKIK.

It belongs to the bacterial ribosomal protein bL33 family.

In Borrelia recurrentis (strain A1), this protein is Large ribosomal subunit protein bL33.